The sequence spans 218 residues: Insulin-induced gene 2 protein (218 aa).

Topologically, residues 1-21 are cytoplasmic; the sequence is MGDRENVSYGSRPILAQKMNL. A helical transmembrane segment spans residues 22–44; it reads LLRGFLLFLIGVFLALVLNLLQV. Topologically, residues 45 to 63 are lumenal; that stretch reads QRNVTLFPPDVLSSLFSSA. The chain crosses the membrane as a helical span at residues 64–81; it reads WWVPLCCGTAAAAIGLLY. Topologically, residues 82 to 96 are cytoplasmic; the sequence is PCIDRHLGEPHKFKR. A helical membrane pass occupies residues 97 to 119; that stretch reads EWSSVMRCVAVFVGINHASAKVD. At 120 to 122 the chain is on the lumenal side; that stretch reads FAN. A helical transmembrane segment spans residues 123-141; sequence NMQLSLTLAALSIGLWWTF. Over 142 to 146 the chain is Cytoplasmic; it reads DRSRS. Residues 147–168 traverse the membrane as a helical segment; that stretch reads GLGLGIGISFFATLVSQLLVYN. Over 169–182 the chain is Lumenal; sequence GVYEYTAPDFLYVR. Residues 183 to 200 traverse the membrane as a helical segment; sequence SWLPCIFFAGGITMGNIG. The Cytoplasmic portion of the chain corresponds to 201-218; the sequence is RQLEMYERKALVEKSHRD. The KxHxx motif lies at 212 to 218; sequence VEKSHRD.

Belongs to the INSIG family. In terms of assembly, interacts with scap; interaction is direct and only takes place in the presence of sterols; it prevents interaction between scap and the coat protein complex II (COPII). Associates with the SCAP-SREBP complex; association is mediated via its interaction with scap and only takes place in the presence of sterols.

The protein localises to the endoplasmic reticulum membrane. Its function is as follows. Oxysterol-binding protein that mediates feedback control of cholesterol synthesis by controlling both endoplasmic reticulum to Golgi transport of scap and degradation of hmgcr. Acts as a negative regulator of cholesterol biosynthesis by mediating the retention of the SCAP-SREBP complex in the endoplasmic reticulum, thereby blocking the processing of sterol regulatory element-binding proteins (SREBPs). Binds oxysterol, including 22-hydroxycholesterol, 24-hydroxycholesterol, 25-hydroxycholesterol and 27-hydroxycholesterol, regulating interaction with scap and retention of the SCAP-SREBP complex in the endoplasmic reticulum. In presence of oxysterol, interacts with scap, retaining the SCAP-SREBP complex in the endoplasmic reticulum, thereby preventing scap from escorting SREBPs to the Golgi. Sterol deprivation reduce oxysterol-binding, disrupting the interaction between insig2 and scap, thereby promoting Golgi transport of the SCAP-SREBP complex, followed by processing and nuclear translocation of SREBPs. Also regulates cholesterol synthesis by regulating degradation of hmgcr. The sequence is that of Insulin-induced gene 2 protein from Xenopus laevis (African clawed frog).